A 359-amino-acid polypeptide reads, in one-letter code: UPF0283 membrane protein Rleg2_1967 (359 aa).

Positions 1 to 43 (MSKPPSDPPRRPPAAFTYEDEATERHDNGRQAERRRKPESFSE) are disordered. Positions 23-40 (TERHDNGRQAERRRKPES) are enriched in basic and acidic residues. 2 consecutive transmembrane segments (helical) span residues 77–97 (FGKI…GLWT) and 111–131 (LGYL…ALVI).

This sequence belongs to the UPF0283 family.

The protein localises to the cell inner membrane. The sequence is that of UPF0283 membrane protein Rleg2_1967 from Rhizobium leguminosarum bv. trifolii (strain WSM2304).